Reading from the N-terminus, the 105-residue chain is Large ribosomal subunit protein uL24 (105 aa).

It belongs to the universal ribosomal protein uL24 family. In terms of assembly, part of the 50S ribosomal subunit.

In terms of biological role, one of two assembly initiator proteins, it binds directly to the 5'-end of the 23S rRNA, where it nucleates assembly of the 50S subunit. One of the proteins that surrounds the polypeptide exit tunnel on the outside of the subunit. This chain is Large ribosomal subunit protein uL24, found in Xanthomonas oryzae pv. oryzae (strain PXO99A).